The chain runs to 657 residues: MSKIIELPDILANQIAAGEVVERPSSVVKELVENAIDAGSSQITIEVEESGLKKIQITDNGEGMTSEDAVLSLRRHATSKIKSQSDLFRIRTLGFRGEALPSIASISLMTIKTATEQGKQGTLLVAKGGNIEKQEVVSSPRGTKILVENLFFNTPARLKYMKSLQSELAHIIDIVNRLSLAHPEVAFTLINDGKEMTKTSGTGDLRQAIAGIYGLNTAKKMIEISNADLDFEISGYVSLPELTRANRNYITLLINGRYIKNFLLNRSILDGYGSKLMVGRFPIAVIDIQIDPYLADVNVHPTKQEVRISKERELMSLISSAISESLKQYDLIPDALENLAKTSTRSVDKPIQTSFSLKQPGLYYDRTKNDFFIDADTVSEPIANFTNLDKSDGSVDNDVKNSVNQGATQSPNIKYASRDQADSENFIHSQDYLSSKQSLNKLVEKLDSEESSTFPELEFFGQMHGTYLFAQGNGGLYIIDQHAAQERVKYEYYREKIGEVDNSLQQLLVPFLFEFSSSDFLQLQEKMSLLQDVGIFLEPYGNNTFILREHPIWMKEEEVESGVYEMCDMLLLTNEVSVKKYRAELAIMMSCKRSIKANHTLDDYSARHLLDQLAQCKNPYNCPHGRPVLVNFTKADMEKMFKRIQENHTSLRDLGKY.

Belongs to the DNA mismatch repair MutL/HexB family.

In terms of biological role, this protein is involved in the repair of mismatches in DNA. It is required for dam-dependent methyl-directed DNA mismatch repair. May act as a 'molecular matchmaker', a protein that promotes the formation of a stable complex between two or more DNA-binding proteins in an ATP-dependent manner without itself being part of a final effector complex. This Streptococcus agalactiae serotype Ia (strain ATCC 27591 / A909 / CDC SS700) protein is DNA mismatch repair protein MutL.